A 384-amino-acid chain; its full sequence is Guanine nucleotide-binding protein alpha-1 subunit (384 aa).

Gly-2 carries N-myristoyl glycine lipidation. The S-palmitoyl cysteine moiety is linked to residue Cys-5. In terms of domain architecture, G-alpha spans His-38–Leu-384. The G1 motif stretch occupies residues Lys-41 to Thr-54. GTP-binding residues include Glu-49, Ser-50, Gly-51, Lys-52, Ser-53, Thr-54, Leu-188, Tyr-189, Thr-194, Gly-222, Asn-288, Lys-289, Asp-291, and Ala-356. Ser-53 contacts Mg(2+). The tract at residues Asp-186 to Thr-194 is G2 motif. Position 194 (Thr-194) interacts with Mg(2+). Positions Tyr-215 to Arg-224 are G3 motif. Residues Met-284–Asp-291 form a G4 motif region. Residues Thr-354–Gln-359 form a G5 motif region.

The protein belongs to the G-alpha family. G proteins are composed of 3 units; alpha, beta and gamma. The alpha chain contains the guanine nucleotide binding site. The cofactor is Mg(2+).

Its function is as follows. Guanine nucleotide-binding proteins (G proteins) are involved as modulators or transducers in various transmembrane signaling systems. In Lupinus luteus (European yellow lupine), this protein is Guanine nucleotide-binding protein alpha-1 subunit (GPA1).